The following is an 821-amino-acid chain: DNA replication licensing factor MCM6 (821 aa).

Residue Met-1 is modified to N-acetylmethionine. A phosphoserine mark is found at Ser-13, Ser-219, and Ser-271. Position 278 is a phosphothreonine (Thr-278). In terms of domain architecture, MCM spans 346–553 (LYHNLCTSLF…TDYAIARRIV (208 aa)). ATP-binding residues include His-359, Ser-399, Thr-400, Ala-401, Lys-402, Ser-403, and Asn-504. The Arginine finger signature appears at 528–531 (SRFD). The ADP site is built by Arg-619 and Glu-622. Residue Lys-643 is modified to N6-acetyllysine. The interval 676 to 708 (TDEGQGGVNGHADSPAPVNRFNGSSEDASQETV) is disordered. Residues Ser-689, Ser-704, and Ser-762 each carry the phosphoserine modification. Residues 696–708 (FNGSSEDASQETV) show a composition bias toward polar residues. Thr-791 is subject to Phosphothreonine.

This sequence belongs to the MCM family. As to quaternary structure, component of the MCM2-7 complex. The complex forms a toroidal hexameric ring with the proposed subunit order MCM2-MCM6-MCM4-MCM7-MCM3-MCM5. Component of the CMG helicase complex, a hexameric ring of related MCM2-7 subunits stabilized by CDC45 and the tetrameric GINS complex. May interact with MCM10. Interacts with TIPIN. Interacts with CDT1. Interacts with MCMBP. Interacts with DDI2. Post-translationally, O-glycosylated (O-GlcNAcylated), in a cell cycle-dependent manner.

The protein resides in the nucleus. It is found in the chromosome. It carries out the reaction ATP + H2O = ADP + phosphate + H(+). Functionally, acts as a component of the MCM2-7 complex (MCM complex) which is the replicative helicase essential for 'once per cell cycle' DNA replication initiation and elongation in eukaryotic cells. Core component of CDC45-MCM-GINS (CMG) helicase, the molecular machine that unwinds template DNA during replication, and around which the replisome is built. The active ATPase sites in the MCM2-7 ring are formed through the interaction surfaces of two neighboring subunits such that a critical structure of a conserved arginine finger motif is provided in trans relative to the ATP-binding site of the Walker A box of the adjacent subunit. The six ATPase active sites, however, are likely to contribute differentially to the complex helicase activity. In Mus musculus (Mouse), this protein is DNA replication licensing factor MCM6 (Mcm6).